The chain runs to 341 residues: Fructose-1,6-bisphosphatase class 1 1 (341 aa).

Positions 92, 114, 116, and 117 each coordinate Mg(2+). Residues 117 to 120 (DGSS), Asn209, and Lys275 contribute to the substrate site. A Mg(2+)-binding site is contributed by Glu281.

Belongs to the FBPase class 1 family. As to quaternary structure, homotetramer. Requires Mg(2+) as cofactor.

The protein resides in the cytoplasm. The catalysed reaction is beta-D-fructose 1,6-bisphosphate + H2O = beta-D-fructose 6-phosphate + phosphate. It functions in the pathway carbohydrate biosynthesis; gluconeogenesis. This is Fructose-1,6-bisphosphatase class 1 1 from Leptothrix cholodnii (strain ATCC 51168 / LMG 8142 / SP-6) (Leptothrix discophora (strain SP-6)).